A 142-amino-acid chain; its full sequence is Large ribosomal subunit protein uL11 (142 aa).

Belongs to the universal ribosomal protein uL11 family. Part of the ribosomal stalk of the 50S ribosomal subunit. Interacts with L10 and the large rRNA to form the base of the stalk. L10 forms an elongated spine to which L12 dimers bind in a sequential fashion forming a multimeric L10(L12)X complex. In terms of processing, one or more lysine residues are methylated.

Functionally, forms part of the ribosomal stalk which helps the ribosome interact with GTP-bound translation factors. This chain is Large ribosomal subunit protein uL11, found in Edwardsiella ictaluri (strain 93-146).